The sequence spans 476 residues: Major facilitator superfamily domain-containing protein 12 (476 aa).

Residue M1 is modified to N-acetylmethionine. At 1–25 (MSPPSDDAGPGPPRTLSLAARLSFA) the chain is on the cytoplasmic side. A helical transmembrane segment spans residues 26 to 46 (VGHFLNDLCAGMWFTYLLLFL). The Lumenal segment spans residues 47–55 (HSVRGYSSR). Residues 56 to 76 (GAGLLLLLGQVADGLCTPLVG) traverse the membrane as a helical segment. The Cytoplasmic portion of the chain corresponds to 77–94 (YEADRASCVRCGPRKAWH). A helical membrane pass occupies residues 95 to 115 (LAGTVCVLLSFPFIFSPCLGC). At 116–121 (GEATPE) the chain is on the lumenal side. A helical membrane pass occupies residues 122–142 (WAALLYYGPFIVVFQFGWAAT). The Cytoplasmic segment spans residues 143-167 (QIAHLSLIPELVTSDHEKVELTALR). A helical membrane pass occupies residues 168–188 (YAFTVVANITVYGAAWLLLHL). Residues 189-213 (QGSAHGEQDISVGDQLGVQDVPVFR) are Lumenal-facing. A helical transmembrane segment spans residues 214–234 (NLALLVVGVGAIFSLLFHLGT). The Cytoplasmic portion of the chain corresponds to 235–284 (KEGHRSQHWGNEPNEHTPLVAPAAQPLLLWKHWLREPAFYQVGMLYMTTR). T251 is modified (phosphothreonine). The helical transmembrane segment at 285-305 (LIVNLSQTYIAMYLTYSLSLP) threads the bilayer. Residue K306 is a topological domain, lumenal. A helical membrane pass occupies residues 307 to 327 (KFIATIPLVMYLSGFFSSFLM). At 328 to 343 (KPVNRRIGRNMTYFTG) the chain is on the cytoplasmic side. Transmembrane regions (helical) follow at residues 344–364 (LLVILAFAAWVALADNLGVAV) and 365–385 (YGAAVLLGAGCATILVTSLAM). Residues 386–398 (TADLIGPHTHSGA) lie on the Cytoplasmic side of the membrane. The helical transmembrane segment at 399-419 (FVYGAMSFSDKVANGLAVMAV) threads the bilayer. At 420–444 (QSLHPCPSELCCGACISFYHWVMTA) the chain is on the lumenal side. Residues 445–465 (VTGGVGVAAALALCSLLIWPI) traverse the membrane as a helical segment. Residues 466 to 476 (RIRNRDPRDRP) lie on the Cytoplasmic side of the membrane.

The protein belongs to the major facilitator superfamily. In terms of processing, phosphorylation at Thr-251 by MTOR via mTORC1 pathway promotes cysteine transport in lysosomes, thereby regulating lysosomal cysteine and cystine storage and redox homeostasis.

The protein resides in the melanosome membrane. The protein localises to the lysosome membrane. It catalyses the reaction L-cysteine(in) = L-cysteine(out). Transporter that mediates the import of cysteine into melanosomes, thereby regulating skin/hair pigmentation. In melanosomes, cysteine import is required both for normal levels of cystine, the oxidized dimer of cysteine, and provide cysteine for the production of the cysteinyldopas used in pheomelanin synthesis, thereby regulating skin/hair pigmentation. Also catalyzes import of cysteine into lysosomes in non-pigmented cells, regulating lysosomal cystine and cysteine storage, which is essnetial for redox homeostasis. The sequence is that of Major facilitator superfamily domain-containing protein 12 from Mus musculus (Mouse).